A 31-amino-acid polypeptide reads, in one-letter code: Large ribosomal subunit protein bL21 (31 aa).

The protein belongs to the bacterial ribosomal protein bL21 family. As to quaternary structure, part of the 50S ribosomal subunit. Contacts protein L20.

Functionally, this protein binds to 23S rRNA in the presence of protein L20. The chain is Large ribosomal subunit protein bL21 (rplU) from Streptococcus thermophilus.